Reading from the N-terminus, the 351-residue chain is MVVSADPLSSERAEMNILEINQELRSQLAESNQQFRDLKEKFLITQATAYSLANQLKKYKCEEYKDIIDSVLRDELQSMEKLAEKLRQAEELRQYKALVHSQAKELTQLREKLREGRDASRWLNKHLKTLLTPDDPDKSQGQDLREQLAEGHRLAEHLVHKLSPENDEDEDEDEDDKDEEVEKVQESPAPREVQKTEEKEVPQDSLEECAVTCSNSHNPSNSNQPHRSTKITFKEHEVDSALVVESEHPHDEEEEALNIPPENQNDHEEEEGKAPVPPRHHDKSNSYRHREVSFLALDEQKVCSAQDVARDYSNPKWDETSLGFLDTPLARRESVALKGRTRSWQHSSHAN.

2 coiled-coil regions span residues 10 to 43 (SERAEMNILEINQELRSQLAESNQQFRDLKEKFL) and 69 to 115 (DSVL…KLRE). Residues 157–285 (HLVHKLSPEN…VPPRHHDKSN (129 aa)) form a disordered region. Acidic residues predominate over residues 165 to 179 (ENDEDEDEDEDDKDE). The Olduvai domain maps to 174–261 (EDDKDEEVEK…EEEEALNIPP (88 aa)). Over residues 192–202 (EVQKTEEKEVP) the composition is skewed to basic and acidic residues. Positions 214–226 (SNSHNPSNSNQPH) are enriched in low complexity. Basic and acidic residues-rich tracts occupy residues 232-251 (TFKEHEVDSALVVESEHPHD) and 264-273 (QNDHEEEEGK).

Belongs to the NBPF family. In terms of tissue distribution, expressed in brain and medulla.

Its subcellular location is the cytoplasm. The chain is Putative NBPF family member NBPF5 from Homo sapiens (Human).